Reading from the N-terminus, the 274-residue chain is Large ribosomal subunit protein uL2 (274 aa).

The interval 228–254 (VDHPMGGGEGRASGGHPRSRKGLYAKG) is disordered. A compositionally biased stretch (basic residues) spans 244–254 (PRSRKGLYAKG).

Belongs to the universal ribosomal protein uL2 family. Part of the 50S ribosomal subunit. Forms a bridge to the 30S subunit in the 70S ribosome.

One of the primary rRNA binding proteins. Required for association of the 30S and 50S subunits to form the 70S ribosome, for tRNA binding and peptide bond formation. It has been suggested to have peptidyltransferase activity; this is somewhat controversial. Makes several contacts with the 16S rRNA in the 70S ribosome. The polypeptide is Large ribosomal subunit protein uL2 (Azobacteroides pseudotrichonymphae genomovar. CFP2).